The sequence spans 452 residues: Cytoplasmic tRNA 2-thiolation protein 2 (452 aa).

The protein belongs to the CTU2/NCS2 family.

Its subcellular location is the cytoplasm. It participates in tRNA modification; 5-methoxycarbonylmethyl-2-thiouridine-tRNA biosynthesis. Its function is as follows. Plays a central role in 2-thiolation of mcm(5)S(2)U at tRNA wobble positions of tRNA(Lys), tRNA(Glu) and tRNA(Gln). May act by forming a heterodimer with NCS6 that ligates sulfur from thiocarboxylated URM1 onto the uridine of tRNAs at wobble position. Prior mcm(5) tRNA modification by the elongator complex is required for 2-thiolation. May also be involved in protein urmylation. This is Cytoplasmic tRNA 2-thiolation protein 2 from Candida albicans (strain SC5314 / ATCC MYA-2876) (Yeast).